Here is a 76-residue protein sequence, read N- to C-terminus: Large ribosomal subunit protein bL31 (76 aa).

The protein belongs to the bacterial ribosomal protein bL31 family. Type A subfamily. As to quaternary structure, part of the 50S ribosomal subunit.

Binds the 23S rRNA. In Pelagibacter ubique (strain HTCC1062), this protein is Large ribosomal subunit protein bL31 (rpmE).